We begin with the raw amino-acid sequence, 490 residues long: Type I restriction enzyme EcoEI methylase subunit (490 aa).

Residues 163–168, 193–195, and E226 contribute to the S-adenosyl-L-methionine site; these read EFYTPR and TGG.

It belongs to the N(4)/N(6)-methyltransferase family. As to quaternary structure, the type I restriction/modification system is composed of three polypeptides R, M and S; the restriction enzyme has stoichiometry R(2)M(2)S(1) while the methyltransferase is M(2)S(1).

The enzyme catalyses a 2'-deoxyadenosine in DNA + S-adenosyl-L-methionine = an N(6)-methyl-2'-deoxyadenosine in DNA + S-adenosyl-L-homocysteine + H(+). The subtype gamma methyltransferase (M) subunit of a type I restriction enzyme. The M and S subunits together form a methyltransferase (MTase) that methylates two adenine residues of the sequence 5'-GAGN(7)ATGC-3'. In the presence of the R subunit the complex can also act as an endonuclease, binding to the same target sequence but cutting the DNA some distance from this site. Whether the DNA is cut or modified depends on the methylation state of the target sequence. When the target site is unmodified, the DNA is cut. When the target site is hemimethylated, the complex acts as a maintenance MTase modifying the DNA so that both strands become methylated. After locating a non-methylated recognition site, the enzyme complex serves as a molecular motor that translocates DNA in an ATP-dependent manner until a collision occurs that triggers cleavage. This Escherichia coli protein is Type I restriction enzyme EcoEI methylase subunit (hsdM).